We begin with the raw amino-acid sequence, 374 residues long: UDP-N-acetylglucosamine--N-acetylmuramyl-(pentapeptide) pyrophosphoryl-undecaprenol N-acetylglucosamine transferase (374 aa).

UDP-N-acetyl-alpha-D-glucosamine-binding positions include Thr-13 to Gly-15, Asn-124, Arg-165, Ser-193, and Gln-294.

The protein belongs to the glycosyltransferase 28 family. MurG subfamily.

The protein resides in the cell inner membrane. The catalysed reaction is di-trans,octa-cis-undecaprenyl diphospho-N-acetyl-alpha-D-muramoyl-L-alanyl-D-glutamyl-meso-2,6-diaminopimeloyl-D-alanyl-D-alanine + UDP-N-acetyl-alpha-D-glucosamine = di-trans,octa-cis-undecaprenyl diphospho-[N-acetyl-alpha-D-glucosaminyl-(1-&gt;4)]-N-acetyl-alpha-D-muramoyl-L-alanyl-D-glutamyl-meso-2,6-diaminopimeloyl-D-alanyl-D-alanine + UDP + H(+). It participates in cell wall biogenesis; peptidoglycan biosynthesis. Its function is as follows. Cell wall formation. Catalyzes the transfer of a GlcNAc subunit on undecaprenyl-pyrophosphoryl-MurNAc-pentapeptide (lipid intermediate I) to form undecaprenyl-pyrophosphoryl-MurNAc-(pentapeptide)GlcNAc (lipid intermediate II). This Sinorhizobium medicae (strain WSM419) (Ensifer medicae) protein is UDP-N-acetylglucosamine--N-acetylmuramyl-(pentapeptide) pyrophosphoryl-undecaprenol N-acetylglucosamine transferase.